A 388-amino-acid chain; its full sequence is Galactokinase (388 aa).

33 to 36 contributes to the substrate binding site; that stretch reads EHTD. ATP is bound by residues serine 67 and 124-130; that span reads GSGLSSS. Residues serine 130 and glutamate 162 each contribute to the Mg(2+) site. Residue aspartate 174 is the Proton acceptor of the active site. Substrate is bound at residue tyrosine 224.

It belongs to the GHMP kinase family. GalK subfamily.

It is found in the cytoplasm. The enzyme catalyses alpha-D-galactose + ATP = alpha-D-galactose 1-phosphate + ADP + H(+). The protein operates within carbohydrate metabolism; galactose metabolism. Its function is as follows. Catalyzes the transfer of the gamma-phosphate of ATP to D-galactose to form alpha-D-galactose-1-phosphate (Gal-1-P). The polypeptide is Galactokinase (Streptococcus thermophilus (strain ATCC BAA-491 / LMD-9)).